The sequence spans 144 residues: Maximins 2/H8 type 1 (144 aa).

The N-terminal stretch at 1–18 is a signal peptide; it reads MNFKYIVAVSFLIASAYA. The propeptide occupies 19-43; the sequence is RSEENEIQSLSQRDVLEEESLREMR. Position 70 is an asparagine amide (Asn70). Positions 74–123 are excised as a propeptide; that stretch reads TAEEHEVMKRLETVMRDLDSLDYPEEASERETRGFNQEEIANLFTKKEKR. Ile143 bears the Isoleucine amide mark.

The protein belongs to the bombinin family. As to expression, expressed by the skin glands.

The protein resides in the secreted. Its function is as follows. Maximin-2 shows antibacterial activity against both Gram-positive and Gram-negative bacteria. It also shows antimicrobial activity against the fungus C.albicans, but not against A.flavus nor P.uticale. It has little hemolytic activity. In terms of biological role, maximin-H8 shows antimicrobial activity against bacteria and against the fungus C.albicans. Shows strong hemolytic activity. The polypeptide is Maximins 2/H8 type 1 (Bombina maxima (Giant fire-bellied toad)).